The chain runs to 103 residues: Large ribosomal subunit protein bL21 (103 aa).

The protein belongs to the bacterial ribosomal protein bL21 family. In terms of assembly, part of the 50S ribosomal subunit. Contacts protein L20.

This protein binds to 23S rRNA in the presence of protein L20. The polypeptide is Large ribosomal subunit protein bL21 (Ruthia magnifica subsp. Calyptogena magnifica).